Reading from the N-terminus, the 86-residue chain is Neurotoxin LmNaTx17 (86 aa).

The first 18 residues, 1–18 (MKILFVIVLAAFFIGVHC), serve as a signal peptide directing secretion. The LCN-type CS-alpha/beta domain occupies 19–85 (KHGYPVQYSG…TWDYKTGKCR (67 aa)). Disulfide bonds link Cys-33/Cys-84, Cys-37/Cys-58, Cys-44/Cys-65, and Cys-48/Cys-67.

Belongs to the long (4 C-C) scorpion toxin superfamily. Sodium channel inhibitor family. Beta subfamily. Expressed by the venom gland.

It is found in the secreted. Functionally, binds voltage-independently at site-4 of sodium channels (Nav) and shift the voltage of activation toward more negative potentials thereby affecting sodium channel activation and promoting spontaneous and repetitive firing. The sequence is that of Neurotoxin LmNaTx17 from Lychas mucronatus (Chinese swimming scorpion).